A 182-amino-acid chain; its full sequence is MVFDSFDIKSLIRPVIDFPKPGVIFRDITPLFQSPKALRLVMDSFAHRYVEADFTHIGAMDARGFLIGSVLAYQLNKPLVLFRKQGKLPADVLAEGYATEYGEAFLEVHADSLCEGDSVVMFDDLIATGGTLIAAANLIRRMGARVHEAAAIIDLPELGGSQRLEDMGIPTFCLTQFALTDK.

It belongs to the purine/pyrimidine phosphoribosyltransferase family. In terms of assembly, homodimer.

The protein resides in the cytoplasm. The catalysed reaction is AMP + diphosphate = 5-phospho-alpha-D-ribose 1-diphosphate + adenine. Its pathway is purine metabolism; AMP biosynthesis via salvage pathway; AMP from adenine: step 1/1. Functionally, catalyzes a salvage reaction resulting in the formation of AMP, that is energically less costly than de novo synthesis. This chain is Adenine phosphoribosyltransferase, found in Pseudomonas fluorescens (strain Pf0-1).